The following is a 170-amino-acid chain: uncharacterized protein (170 aa).

This is an uncharacterized protein from Bacillus subtilis (strain 168).